Here is a 928-residue protein sequence, read N- to C-terminus: Nitrogen network kinase 1 (928 aa).

The span at 1–12 (MFTSQRQLRQNG) shows a compositional bias: polar residues. 2 disordered regions span residues 1–43 (MFTS…SYGR) and 81–118 (HEHPSRSTLVQLQTRSQPDDVASSQVNPEGGTDDLELG). The span at 13–29 (SPMSSSRSSQHSSGTAS) shows a compositional bias: low complexity. 2 stretches are compositionally biased toward polar residues: residues 30-40 (PISDSPASNRS) and 86-107 (RSTLVQLQTRSQPDDVASSQVN). Phosphoserine occurs at positions 178 and 179. Residues 374-394 (ANDDNINSRNTPNNSNDTYVN) form a disordered region. Residues 375-391 (NDDNINSRNTPNNSNDT) are compositionally biased toward low complexity. Residues Ser-405 and Ser-426 each carry the phosphoserine modification. The region spanning 449-912 (HRLGKIIGFG…WKLKRIEEVL (464 aa)) is the Protein kinase domain. Residues 455–463 (IGFGAWGII) and Lys-478 contribute to the ATP site. Asp-580 functions as the Proton acceptor in the catalytic mechanism. 2 disordered regions span residues 670–741 (ENRK…KYIG) and 767–813 (YDSP…SGSS). Polar residues predominate over residues 683-696 (VSSSSHSLKHLNQP). Ser-737 is subject to Phosphoserine. Tyr-739 is subject to Phosphotyrosine. Low complexity predominate over residues 769–813 (SPDSSQSEISAASSSSSNLSSLSSSTKASAVTNSGVTTSSPSGSS).

The protein belongs to the protein kinase superfamily. Ser/Thr protein kinase family. As to quaternary structure, interacts with URE2 and GDH2. Also interacts with the TORC1 kinase complex.

The protein localises to the cytoplasm. The enzyme catalyses L-seryl-[protein] + ATP = O-phospho-L-seryl-[protein] + ADP + H(+). It catalyses the reaction L-threonyl-[protein] + ATP = O-phospho-L-threonyl-[protein] + ADP + H(+). Its function is as follows. Serine/threonine-protein kinase involved in the phosphorylation of the NAD(+)-dependent glutamate dehydrogenase GDH2. When overexpressed, confers hypersensitivity to rapamycin and induces rapid nuclear accumulation of GLN3 to activate the transcription of nitrogen-regulated genes. The sequence is that of Nitrogen network kinase 1 (NNK1) from Saccharomyces cerevisiae (strain ATCC 204508 / S288c) (Baker's yeast).